We begin with the raw amino-acid sequence, 1403 residues long: DNA-directed RNA polymerase subunit beta' (1403 aa).

Cysteine 71, cysteine 73, cysteine 86, and cysteine 89 together coordinate Zn(2+). Aspartate 462, aspartate 464, and aspartate 466 together coordinate Mg(2+). Zn(2+) contacts are provided by cysteine 820, cysteine 893, cysteine 900, and cysteine 903.

The protein belongs to the RNA polymerase beta' chain family. As to quaternary structure, the RNAP catalytic core consists of 2 alpha, 1 beta, 1 beta' and 1 omega subunit. When a sigma factor is associated with the core the holoenzyme is formed, which can initiate transcription. It depends on Mg(2+) as a cofactor. Requires Zn(2+) as cofactor.

It carries out the reaction RNA(n) + a ribonucleoside 5'-triphosphate = RNA(n+1) + diphosphate. Its function is as follows. DNA-dependent RNA polymerase catalyzes the transcription of DNA into RNA using the four ribonucleoside triphosphates as substrates. This Methylobacterium radiotolerans (strain ATCC 27329 / DSM 1819 / JCM 2831 / NBRC 15690 / NCIMB 10815 / 0-1) protein is DNA-directed RNA polymerase subunit beta'.